Consider the following 748-residue polypeptide: Peroxisomal membrane protein PEX14 (748 aa).

Disordered stretches follow at residues 1–138 and 190–228; these read MDND…LSPS and GNIN…NNNN. Residues 1–277 lie on the Peroxisomal side of the membrane; the sequence is MDNDDINNNN…IAQLMMNNNR (277 aa). Residues 7–30 show a composition bias toward low complexity; sequence NNNNNNNNNNNNNNNSQELDQQEQ. Residues 8–60 are a coiled coil; sequence NNNNNNNNNNNNNNSQELDQQEQTQEEITKQRIQKRKEEAKRIMEERKKREQQ. Residues 43–59 are compositionally biased toward basic and acidic residues; that stretch reads RKEEAKRIMEERKKREQ. Polar residues predominate over residues 86–104; the sequence is PQRQQQYDDNDEPPQQQQY. Composition is skewed to low complexity over residues 122 to 131, 190 to 209, and 218 to 228; these read TTSSTASAAT, GNIN…NSIS, and NNNNNSSNNNN. A coiled-coil region spans residues 241–277; it reads QQHQQQQQMALTQIQSYQKRLEADDQRIAQLMMNNNR. A helical transmembrane segment spans residues 278–300; the sequence is FSWNSFLFSVTAIVGAASGLAYL. The Cytoplasmic portion of the chain corresponds to 301 to 748; sequence TSNYIIPFLN…INNTDSSVEK (448 aa). The stretch at 316 to 413 forms a coiled coil; it reads KDASANMDKK…IGNKENSNNS (98 aa). Disordered stretches follow at residues 406 to 673 and 685 to 748; these read NKEN…ETPY and KQGK…SVEK. Composition is skewed to low complexity over residues 409-424 and 445-476; these read NSNN…NNNN and STNN…PGSN. Residues 510–527 are compositionally biased toward polar residues; it reads SWQQKSSNPPSDLSNAND. Composition is skewed to low complexity over residues 528 to 542 and 569 to 611; these read KSSP…PTKP and TTTT…NNNN. Residues 612-627 are compositionally biased toward polar residues; that stretch reads TTIASTSNESNNSKVE. Low complexity predominate over residues 628–661; the sequence is TTSNDSDKSTSPSSSSNNTTSTTATTTTITSAST. The span at 710 to 723 shows a compositional bias: basic and acidic residues; that stretch reads SAKERPKKPWERDT. The span at 724-748 shows a compositional bias: polar residues; the sequence is LTSVTNNLSVEETQTINNTDSSVEK.

The protein belongs to the peroxin-14 family. Interacts with PEX13; forming the PEX13-PEX14 docking complex. Interacts with PEX5 (via WxxxF/Y motifs).

It is found in the peroxisome membrane. Component of the PEX13-PEX14 docking complex, a translocon channel that specifically mediates the import of peroxisomal cargo proteins bound to PEX5 receptor. The PEX13-PEX14 docking complex forms a large import pore which can be opened to a diameter of about 9 nm. Mechanistically, PEX5 receptor along with cargo proteins associates with the PEX14 subunit of the PEX13-PEX14 docking complex in the cytosol, leading to the insertion of the receptor into the organelle membrane with the concomitant translocation of the cargo into the peroxisome matrix. This chain is Peroxisomal membrane protein PEX14 (pex14), found in Dictyostelium discoideum (Social amoeba).